Reading from the N-terminus, the 215-residue chain is Cytochrome b6 (215 aa).

Residues 32 to 52 traverse the membrane as a helical segment; sequence IFYCLGGITFTLFLVQVATGF. A heme c-binding site is contributed by C35. The heme b site is built by H86 and H100. 3 helical membrane-spanning segments follow: residues 90-110, 116-136, and 186-206; these read ASMMVLSMILHVCRVYLTGGF, LTWITGVIMAVCTVSFGVTGY, and LHTFVLPLLTVVFMLAHFLMI. Residues H187 and H202 each contribute to the heme b site.

The protein belongs to the cytochrome b family. PetB subfamily. The 4 large subunits of the cytochrome b6-f complex are cytochrome b6, subunit IV (17 kDa polypeptide, PetD), cytochrome f and the Rieske protein, while the 4 small subunits are PetG, PetL, PetM and PetN. The complex functions as a dimer. It depends on heme b as a cofactor. Heme c serves as cofactor.

It localises to the plastid. The protein localises to the chloroplast thylakoid membrane. Component of the cytochrome b6-f complex, which mediates electron transfer between photosystem II (PSII) and photosystem I (PSI), cyclic electron flow around PSI, and state transitions. The chain is Cytochrome b6 from Tupiella akineta (Green alga).